A 1086-amino-acid polypeptide reads, in one-letter code: NAD(P) transhydrogenase, mitochondrial (1086 aa).

A mitochondrion-targeting transit peptide spans 1-43; that stretch reads MANLLKTVVTGCSCPFLSNLGSCKVLPGKKNFLRTFHTHRILW. At 44–474 the chain is on the mitochondrial matrix side; sequence CSAPVKPGIP…TITPFRKTMT (431 aa). Lys70 is subject to N6-acetyllysine. Position 117 is an N6-succinyllysine (Lys117). NAD(+) is bound at residue 182–184; that stretch reads RVT. Lys224 is subject to N6-succinyllysine. NAD(+)-binding positions include Val237, 257 to 259, and Gly287; that span reads DTR. At Lys294 the chain carries N6-succinyllysine. Positions 300 and 319 each coordinate NAD(+). Lys331 bears the N6-succinyllysine mark. The residue at position 397 (Lys397) is an N6-acetyllysine. 4 consecutive transmembrane segments (helical) span residues 475-493, 501-521, 527-546, and 558-578; these read SASV…GIAA, MVTT…GVTP, LMSV…LVLM, and GLAA…FLVT. At 579–595 the chain is on the mitochondrial matrix side; that stretch reads QRMLDMFKRPTDPPEYN. A run of 5 helical transmembrane segments spans residues 596–616, 622–642, 646–666, 672–691, and 702–722; these read YLYL…LYSG, IMYL…STQG, LGNA…LGGL, LLAQ…LTIA, and LVAA…IAEY. Residues 723–739 lie on the Cytoplasmic side of the membrane; sequence IIEYPHFATDAAANLTK. The next 5 helical transmembrane spans lie at 740 to 760, 778 to 797, 801 to 819, 833 to 853, and 857 to 879; these read IVAY…LVAY, HLLN…PFMM, FTTG…AVMG, VVIT…GFLL, and LLTI…MCVA. The Mitochondrial matrix portion of the chain corresponds to 880–1086; the sequence is MNRSLANVIL…QAKVRESYQK (207 aa). Residues Tyr933, 965-970, 1009-1011, 1026-1027, 1042-1049, and 1068-1069 contribute to the NADP(+) site; these read VAGRMP, NDT, GM, KRSLGVGY, and DA. At Lys1079 the chain carries N6-succinyllysine.

The protein in the N-terminal section; belongs to the AlaDH/PNT family. In the C-terminal section; belongs to the PNT beta subunit family. In terms of assembly, homodimer.

It localises to the mitochondrion inner membrane. It carries out the reaction NAD(+) + NADPH + H(+)(in) = NADH + NADP(+) + H(+)(out). Functionally, the transhydrogenation between NADH and NADP is coupled to respiration and ATP hydrolysis and functions as a proton pump across the membrane. May play a role in reactive oxygen species (ROS) detoxification in the adrenal gland. In Bos taurus (Bovine), this protein is NAD(P) transhydrogenase, mitochondrial (NNT).